The primary structure comprises 610 residues: Elongation factor 4 (610 aa).

The 183-residue stretch at 11–193 (QRIRNFSIVA…KIVQDIPAPT (183 aa)) folds into the tr-type G domain. GTP contacts are provided by residues 23–28 (DHGKST) and 140–143 (NKVD).

It belongs to the TRAFAC class translation factor GTPase superfamily. Classic translation factor GTPase family. LepA subfamily.

The protein localises to the cell membrane. It carries out the reaction GTP + H2O = GDP + phosphate + H(+). Its function is as follows. Required for accurate and efficient protein synthesis under certain stress conditions. May act as a fidelity factor of the translation reaction, by catalyzing a one-codon backward translocation of tRNAs on improperly translocated ribosomes. Back-translocation proceeds from a post-translocation (POST) complex to a pre-translocation (PRE) complex, thus giving elongation factor G a second chance to translocate the tRNAs correctly. Binds to ribosomes in a GTP-dependent manner. The polypeptide is Elongation factor 4 (Limosilactobacillus fermentum (strain NBRC 3956 / LMG 18251) (Lactobacillus fermentum)).